The primary structure comprises 452 residues: Phosphoglucosamine mutase (452 aa).

Catalysis depends on S103, which acts as the Phosphoserine intermediate. Mg(2+) contacts are provided by S103, D244, D246, and D248. S103 carries the phosphoserine modification.

The protein belongs to the phosphohexose mutase family. Requires Mg(2+) as cofactor. In terms of processing, activated by phosphorylation.

It catalyses the reaction alpha-D-glucosamine 1-phosphate = D-glucosamine 6-phosphate. Catalyzes the conversion of glucosamine-6-phosphate to glucosamine-1-phosphate. In Rhodospirillum rubrum (strain ATCC 11170 / ATH 1.1.1 / DSM 467 / LMG 4362 / NCIMB 8255 / S1), this protein is Phosphoglucosamine mutase.